Here is a 509-residue protein sequence, read N- to C-terminus: Steroid 17-alpha-hydroxylase/17,20 lyase (509 aa).

Asn-202 is a substrate binding site. Cys-442 lines the heme pocket.

This sequence belongs to the cytochrome P450 family. It depends on heme as a cofactor.

It is found in the endoplasmic reticulum membrane. The protein localises to the microsome membrane. The catalysed reaction is a C21-steroid + reduced [NADPH--hemoprotein reductase] + O2 = a 17alpha-hydroxy-C21-steroid + oxidized [NADPH--hemoprotein reductase] + H2O + H(+). It catalyses the reaction progesterone + reduced [NADPH--hemoprotein reductase] + O2 = 17alpha-hydroxyprogesterone + oxidized [NADPH--hemoprotein reductase] + H2O + H(+). The enzyme catalyses pregnenolone + reduced [NADPH--hemoprotein reductase] + O2 = 17alpha-hydroxypregnenolone + oxidized [NADPH--hemoprotein reductase] + H2O + H(+). It carries out the reaction 17alpha-hydroxyprogesterone + reduced [NADPH--hemoprotein reductase] + O2 = androst-4-ene-3,17-dione + acetate + oxidized [NADPH--hemoprotein reductase] + H2O + 2 H(+). The catalysed reaction is 17alpha-hydroxyprogesterone + reduced [NADPH--hemoprotein reductase] + O2 = 16alpha,17alpha-dihydroxyprogesterone + oxidized [NADPH--hemoprotein reductase] + H2O + H(+). It catalyses the reaction 16alpha,17alpha-dihydroxyprogesterone + reduced [NADPH--hemoprotein reductase] + O2 = 6beta,16alpha,17alpha-trihydroxyprogesterone + oxidized [NADPH--hemoprotein reductase] + H2O + H(+). The enzyme catalyses 17alpha-hydroxypregnenolone + reduced [NADPH--hemoprotein reductase] + O2 = 3beta-hydroxyandrost-5-en-17-one + acetate + oxidized [NADPH--hemoprotein reductase] + H2O + 2 H(+). It carries out the reaction 16alpha,17alpha-dihydroxypregnenolone + reduced [NADPH--hemoprotein reductase] + O2 = 3beta,16alpha-dihydroxy-androst-5-en-17-one + acetate + oxidized [NADPH--hemoprotein reductase] + H2O + 2 H(+). The catalysed reaction is 3beta-hydroxyandrost-5-en-17-one + reduced [NADPH--hemoprotein reductase] + O2 = 3beta,16alpha-dihydroxy-androst-5-en-17-one + oxidized [NADPH--hemoprotein reductase] + H2O + H(+). It catalyses the reaction androst-4-ene-3,17-dione + reduced [NADPH--hemoprotein reductase] + O2 = 16alpha-hydroxyandrost-4-ene-3,17-dione + oxidized [NADPH--hemoprotein reductase] + H2O + H(+). It participates in steroid hormone biosynthesis. Its pathway is steroid biosynthesis; glucocorticoid biosynthesis. With respect to regulation, regulated predominantly by intracellular cAMP levels. The 17,20-lyase activity is stimulated by cytochrome b5, which acts as an allosteric effector increasing the Vmax of the lyase activity. In terms of biological role, a cytochrome P450 monooxygenase involved in corticoid and androgen biosynthesis. Catalyzes 17-alpha hydroxylation of C21 steroids, which is common for both pathways. A second oxidative step, required only for androgen synthesis, involves an acyl-carbon cleavage. The 17-alpha hydroxy intermediates, as part of adrenal glucocorticoids biosynthesis pathway, are precursors of cortisol. Hydroxylates steroid hormones, pregnenolone and progesterone to form 17-alpha hydroxy metabolites, followed by the cleavage of the C17-C20 bond to form C19 steroids, dehydroepiandrosterone (DHEA) and androstenedione. Has 16-alpha hydroxylase activity. Catalyzes 16-alpha hydroxylation of 17-alpha hydroxy pregnenolone, followed by the cleavage of the C17-C20 bond to form 16-alpha-hydroxy DHEA. Also 16-alpha hydroxylates androgens, relevant for estriol synthesis. Mechanistically, uses molecular oxygen inserting one oxygen atom into a substrate, and reducing the second into a water molecule, with two electrons provided by NADPH via cytochrome P450 reductase (CPR; NADPH-ferrihemoprotein reductase). In Capra hircus (Goat), this protein is Steroid 17-alpha-hydroxylase/17,20 lyase (CYP17A1).